The sequence spans 518 residues: Chromosomal replication initiator protein DnaA (518 aa).

The domain I, interacts with DnaA modulators stretch occupies residues 1 to 72 (MTLAEFWPLC…VREELAAGRS (72 aa)). The interval 72 to 180 (SAFVFKPGEG…DAEEARYEQT (109 aa)) is domain II. The segment at 145-178 (EPRQAAGSASRPESAAVAKARTDAQRDAEEARYE) is disordered. Residues 164 to 177 (ARTDAQRDAEEARY) show a composition bias toward basic and acidic residues. The interval 181–397 (NLSPDYTFDT…GAFNRVGASS (217 aa)) is domain III, AAA+ region. 4 residues coordinate ATP: glycine 225, glycine 227, lysine 228, and threonine 229. Residues 398 to 518 (RFMNRPVIDI…YEKLLILIQN (121 aa)) form a domain IV, binds dsDNA region.

It belongs to the DnaA family. Oligomerizes as a right-handed, spiral filament on DNA at oriC.

The protein resides in the cytoplasm. Plays an essential role in the initiation and regulation of chromosomal replication. ATP-DnaA binds to the origin of replication (oriC) to initiate formation of the DNA replication initiation complex once per cell cycle. Binds the DnaA box (a 9 base pair repeat at the origin) and separates the double-stranded (ds)DNA. Forms a right-handed helical filament on oriC DNA; dsDNA binds to the exterior of the filament while single-stranded (ss)DNA is stabiized in the filament's interior. The ATP-DnaA-oriC complex binds and stabilizes one strand of the AT-rich DNA unwinding element (DUE), permitting loading of DNA polymerase. After initiation quickly degrades to an ADP-DnaA complex that is not apt for DNA replication. Binds acidic phospholipids. The sequence is that of Chromosomal replication initiator protein DnaA from Neisseria meningitidis serogroup A / serotype 4A (strain DSM 15465 / Z2491).